Here is a 450-residue protein sequence, read N- to C-terminus: UDP-N-acetylmuramoylalanine--D-glutamate ligase (450 aa).

119–125 (GTNGKTT) contributes to the ATP binding site.

It belongs to the MurCDEF family.

Its subcellular location is the cytoplasm. It carries out the reaction UDP-N-acetyl-alpha-D-muramoyl-L-alanine + D-glutamate + ATP = UDP-N-acetyl-alpha-D-muramoyl-L-alanyl-D-glutamate + ADP + phosphate + H(+). It functions in the pathway cell wall biogenesis; peptidoglycan biosynthesis. In terms of biological role, cell wall formation. Catalyzes the addition of glutamate to the nucleotide precursor UDP-N-acetylmuramoyl-L-alanine (UMA). The sequence is that of UDP-N-acetylmuramoylalanine--D-glutamate ligase from Lactococcus lactis subsp. lactis (strain IL1403) (Streptococcus lactis).